Consider the following 94-residue polypeptide: Large ribosomal subunit protein uL23 (94 aa).

The protein belongs to the universal ribosomal protein uL23 family. As to quaternary structure, part of the 50S ribosomal subunit. Contacts protein L29, and trigger factor when it is bound to the ribosome.

One of the early assembly proteins it binds 23S rRNA. One of the proteins that surrounds the polypeptide exit tunnel on the outside of the ribosome. Forms the main docking site for trigger factor binding to the ribosome. The polypeptide is Large ribosomal subunit protein uL23 (Geobacter sp. (strain M21)).